The sequence spans 259 residues: Ribonuclease HII (259 aa).

The RNase H type-2 domain maps to 69–257; the sequence is VAVCGVDEVG…VLEESQGLIY (189 aa). Residues Asp75, Glu76, and Asp167 each contribute to the a divalent metal cation site.

It belongs to the RNase HII family. It depends on Mn(2+) as a cofactor. Mg(2+) is required as a cofactor.

The protein resides in the cytoplasm. It carries out the reaction Endonucleolytic cleavage to 5'-phosphomonoester.. Functionally, endonuclease that specifically degrades the RNA of RNA-DNA hybrids. The chain is Ribonuclease HII from Shouchella clausii (strain KSM-K16) (Alkalihalobacillus clausii).